The chain runs to 1847 residues: Peripheral-type benzodiazepine receptor-associated protein 1 (1847 aa).

3 disordered regions span residues 57 to 81 (EESSEPAGAHSPGPIRNTDPEGTET), 282 to 318 (NQREPLRPARSQGSTAPSSVGAPAPGAPGETVLEDDV), and 560 to 626 (SGPK…DTAS). Low complexity-rich tracts occupy residues 294-310 (GSTAPSSVGAPAPGAPG) and 600-613 (SLSNSSRSESIHNS). The 68-residue stretch at 651–718 (ARIQVFLARY…PSNFVERVSD (68 aa)) folds into the SH3 1 domain. Positions 728–787 (ELADSSHSSGPELSFLSGGGGGCSSGGQSSGGRSQPRPEEEATGDELSLSPPPEGLGEPL) are disordered. Residues 744–757 (SGGGGGCSSGGQSS) show a composition bias toward gly residues. 3 Fibronectin type-III domains span residues 789–880 (VPYP…AGAG), 882–974 (VPSQ…TLPA), and 979–1077 (APLD…PALA). Disordered regions lie at residues 1107–1174 (LGYT…EGPD), 1191–1215 (DAGPTPCSTQEELTQKEPSTEVCHR), 1240–1307 (NSLV…ILEQ), 1322–1478 (FSIP…ESSL), and 1514–1616 (PTDG…SHQD). Polar residues predominate over residues 1122–1133 (TQDSPASLSTEM). Residues 1203–1215 (LTQKEPSTEVCHR) are compositionally biased toward basic and acidic residues. The segment covering 1253 to 1266 (DIQEEEEEEEEEEE) has biased composition (acidic residues). Polar residues predominate over residues 1272-1284 (WSFQKQVAGNSIG). Acidic residues-rich tracts occupy residues 1296–1305 (CETDSDEEIL) and 1325–1335 (PEEEEEEDEEE). A compositionally biased stretch (low complexity) spans 1340-1352 (PGPSSSSQDPSQP). Basic and acidic residues-rich tracts occupy residues 1412–1421 (RPQDPREHCS) and 1546–1578 (AWEKGEPERRGRSAIGRTKEPPSRATETGESRG). The 69-residue stretch at 1617–1685 (LPLRVFVALF…PCNMVAEVAV (69 aa)) folds into the SH3 2 domain. Disordered regions lie at residues 1701–1747 (PPNV…PGPP) and 1818–1847 (LEGPGPEAGGLDSGTSQAESQRTRRRRVQC). Positions 1756–1823 (KTSRPMVAAF…PSNFLEGPGP (68 aa)) constitute an SH3 3 domain.

This sequence belongs to the RIMBP family. Interacts with RIMS1 and RIMS2. Interacts with TSPO. Interacts with CACNA1A. Specifically expressed in brain. High expression level in the limbic system such as the nucleus accumbens, septum, and hippocampus, as well as on the cerebellum and pineal gland. Abundant in the CA1 region of the hippocampus.

The protein localises to the cytoplasm. It is found in the mitochondrion. Its function is as follows. Required for synaptic transmission regulation. It probably controls the recruitement of voltage-gated calcium channels to the presynaptic membrane, and modulates neurotransmitter release. In Rattus norvegicus (Rat), this protein is Peripheral-type benzodiazepine receptor-associated protein 1.